Here is a 681-residue protein sequence, read N- to C-terminus: Minichromosome maintenance domain-containing protein 2 (681 aa).

Ser292 bears the Phosphoserine mark. The 89-residue stretch at 533-621 folds into the MCM domain; the sequence is KQFTTEDFEK…LIAALLLEIS (89 aa).

In terms of tissue distribution, predominantly expressed in the gonads and the brain. Not detected in the heart, lung, nor embryonic fibroblasts.

Plays an important role in meiotic recombination and associated DNA double-strand break repair. The protein is Minichromosome maintenance domain-containing protein 2 (Mcmdc2) of Mus musculus (Mouse).